The following is a 274-amino-acid chain: NH(3)-dependent NAD(+) synthetase (274 aa).

Position 46–53 (46–53) interacts with ATP; the sequence is GISGGQDS. Mg(2+) is bound at residue D52. R140 lines the deamido-NAD(+) pocket. An ATP-binding site is contributed by T160. E165 contributes to the Mg(2+) binding site. The deamido-NAD(+) site is built by K173 and D180. The ATP site is built by K189 and T211. A deamido-NAD(+)-binding site is contributed by 260-261; the sequence is HK.

It belongs to the NAD synthetase family. In terms of assembly, homodimer.

The catalysed reaction is deamido-NAD(+) + NH4(+) + ATP = AMP + diphosphate + NAD(+) + H(+). It functions in the pathway cofactor biosynthesis; NAD(+) biosynthesis; NAD(+) from deamido-NAD(+) (ammonia route): step 1/1. Functionally, catalyzes the ATP-dependent amidation of deamido-NAD to form NAD. Uses ammonia as a nitrogen source. In Streptococcus gordonii (strain Challis / ATCC 35105 / BCRC 15272 / CH1 / DL1 / V288), this protein is NH(3)-dependent NAD(+) synthetase.